The following is a 57-amino-acid chain: Phosphatase RapH inhibitor (57 aa).

Propeptides lie at residues 1-34 and 41-57; these read MPIKKKVMMCLAVTLVFGSMSFPTLTNSGGFKES and YIDHSPYKLSDQKKALS. Positions 26–57 are disordered; the sequence is TNSGGFKESTDRNTTYIDHSPYKLSDQKKALS.

The protein belongs to the Phr family. Contains a predicted signal peptide cleavage site in the N-terminal region, however the propeptide is probably only subject to processing events at the ends of the mature peptide.

Its subcellular location is the secreted. It localises to the cytoplasm. Functionally, signaling molecule involved the regulation of both sporulation and competence. Secreted during production, but the mature peptide acts intracellularly, indicating that it needs to be imported into the cell to function. Acts by inhibiting RapH activity. Can inhibit both RapH activities, the dephosphorylation of Spo0F and the sequestration of ComA. This is Phosphatase RapH inhibitor (phrH) from Bacillus subtilis (strain 168).